Consider the following 77-residue polypeptide: Acyl carrier protein (77 aa).

In terms of domain architecture, Carrier spans 1–76 (MSLEDDVKSI…DVITYIKTRQ (76 aa)). Ser36 carries the O-(pantetheine 4'-phosphoryl)serine modification.

This sequence belongs to the acyl carrier protein (ACP) family. 4'-phosphopantetheine is transferred from CoA to a specific serine of apo-ACP by AcpS. This modification is essential for activity because fatty acids are bound in thioester linkage to the sulfhydryl of the prosthetic group.

The protein resides in the cytoplasm. The protein operates within lipid metabolism; fatty acid biosynthesis. Carrier of the growing fatty acid chain in fatty acid biosynthesis. This chain is Acyl carrier protein, found in Chlamydia caviae (strain ATCC VR-813 / DSM 19441 / 03DC25 / GPIC) (Chlamydophila caviae).